The primary structure comprises 218 residues: MGWMHTARFLTTAAQLHHLPAIEVPEIAFVGRSNAGKSTCINTLTQQRQLAFASKKPGRTQHINLFALGKQGATDAVLADLPGYGYAAVSRSDKLRWQQVMLSYLVSRESLTAIVLLCDPRLGLTELDEALLNAVRPRVEAGLKFLVLLTKADKLTRAEQAKALSITRLQAGGGEVRMFSALKKQGVDEVAQLLWQWAHPVQKEDAAVEALPPSKDQN.

The EngB-type G domain occupies 23–200 (EVPEIAFVGR…AQLLWQWAHP (178 aa)). GTP is bound by residues 31-38 (GRSNAGKS), 58-62 (GRTQH), 80-83 (DLPG), 150-153 (TKAD), and 179-181 (FSA). Mg(2+) contacts are provided by serine 38 and threonine 60.

It belongs to the TRAFAC class TrmE-Era-EngA-EngB-Septin-like GTPase superfamily. EngB GTPase family. It depends on Mg(2+) as a cofactor.

Functionally, necessary for normal cell division and for the maintenance of normal septation. In Acidovorax ebreus (strain TPSY) (Diaphorobacter sp. (strain TPSY)), this protein is Probable GTP-binding protein EngB.